The sequence spans 222 residues: Transmembrane reductase CYB561D2 (222 aa).

Over Ala2 to Thr17 the chain is Cytoplasmic. Positions Ala14–Arg217 constitute a Cytochrome b561 domain. A helical transmembrane segment spans residues Ala18–Ala38. Residues Arg39–Ser46 lie on the Lumenal side of the membrane. A helical transmembrane segment spans residues Trp47–Phe67. His48 contributes to the heme b binding site. Over Ser68–Cys85 the chain is Cytoplasmic. Positions 86 and 120 each coordinate heme b. Residues His86–Leu106 traverse the membrane as a helical segment. At His107–Gln122 the chain is on the lumenal side. Residues Ala123–Tyr143 form a helical membrane-spanning segment. The Cytoplasmic portion of the chain corresponds to Pro144–Ser162. His159 contributes to the heme b binding site. A helical transmembrane segment spans residues Gly163–Phe183. At Thr184–Thr186 the chain is on the lumenal side. Residues Val187–Met207 form a helical membrane-spanning segment. The Cytoplasmic portion of the chain corresponds to Asn208–Pro222.

Heme b serves as cofactor. As to expression, highly expressed in the brain, lung, liver, and kidney. Moderately expressed in the heart, placenta, skeletal muscle, and pancreas.

It is found in the endoplasmic reticulum membrane. The protein localises to the cytoplasmic vesicle membrane. The enzyme catalyses monodehydro-L-ascorbate radical(out) + L-ascorbate(in) = monodehydro-L-ascorbate radical(in) + L-ascorbate(out). It carries out the reaction Fe(3+)(out) + L-ascorbate(in) = monodehydro-L-ascorbate radical(in) + Fe(2+)(out) + H(+). In terms of biological role, transmembrane reductase that may use ascorbate as an electron donor in the cytoplasm and transfer electrons across endoplasmic reticulum membranes to reduce monodehydro-L-ascorbate radical and iron cations Fe(3+) in the lumen of that compartment. The protein is Transmembrane reductase CYB561D2 of Mus musculus (Mouse).